The primary structure comprises 296 residues: Mitochondrial arginine transporter BAC2 (296 aa).

Solcar repeat units lie at residues 13–93 (GREF…FSRS), 104–187 (PSYR…VRER), and 198–282 (ENLR…ALRC). 6 helical membrane-spanning segments follow: residues 16–36 (FVAGGFGGVAGIISGYPLDTL), 70–90 (AAPLASVTFQNAMVFQIYAIF), 110–130 (ALGGVATGAVQSLLLTPVELI), 162–181 (GLTITVLRDAPAHGLYFWTY), 204–224 (LVAGGLAGVASWVACYPLDVV), and 260–280 (TAVARAFVVNGAIFAAYEVAL).

This sequence belongs to the mitochondrial carrier (TC 2.A.29) family. As to expression, high expression in flowers, stamens, petals and pollen. Expressed in roots, leaves and stems.

It is found in the mitochondrion inner membrane. With respect to regulation, inhibited by mercuric chloride. Mitochondrial arginine transporter that catalyzes the counter-exchange of arginine with lysine, ornithine, arginine, histidine and citrulline. Substrate preference in reconstituted proteoliposomes is arginine &gt; homoarginine &gt; citrulline &gt; histidine &gt; lysine &gt; ornithine. May be involved in the delivery of arginine, released from seed reserves, to mitochondrial arginase and the export of ornithine. May contribute to proline accumulation in response to hyperosmotic stress. The chain is Mitochondrial arginine transporter BAC2 (BAC2) from Arabidopsis thaliana (Mouse-ear cress).